Reading from the N-terminus, the 227-residue chain is Endolytic peptidoglycan transglycosylase RlpA (227 aa).

The first 21 residues, 1 to 21 (MMNHKFVLLILLIFYCFFLSG), serve as a signal peptide directing secretion. Cys-22 carries N-palmitoyl cysteine lipidation. The S-diacylglycerol cysteine moiety is linked to residue Cys-22.

The protein belongs to the RlpA family.

Its subcellular location is the cell membrane. In terms of biological role, lytic transglycosylase with a strong preference for naked glycan strands that lack stem peptides. This Rickettsia bellii (strain RML369-C) protein is Endolytic peptidoglycan transglycosylase RlpA.